A 203-amino-acid chain; its full sequence is Recombination protein RecR (203 aa).

Residues 56 to 71 (CAVCGNVSDEERCRIC) form a C4-type zinc finger. A Toprim domain is found at 79–179 (SLICVVEEPK…TVTRIASGLP (101 aa)).

The protein belongs to the RecR family.

In terms of biological role, may play a role in DNA repair. It seems to be involved in an RecBC-independent recombinational process of DNA repair. It may act with RecF and RecO. This is Recombination protein RecR from Mycolicibacterium vanbaalenii (strain DSM 7251 / JCM 13017 / BCRC 16820 / KCTC 9966 / NRRL B-24157 / PYR-1) (Mycobacterium vanbaalenii).